Reading from the N-terminus, the 364-residue chain is Dihydroorotase (364 aa).

Zn(2+)-binding residues include His14, His16, Lys98, His137, His180, and Asp258. Lys98 is modified (N6-carboxylysine).

The protein belongs to the metallo-dependent hydrolases superfamily. DHOase family. Class II DHOase subfamily. Zn(2+) is required as a cofactor.

The enzyme catalyses (S)-dihydroorotate + H2O = N-carbamoyl-L-aspartate + H(+). It participates in pyrimidine metabolism; UMP biosynthesis via de novo pathway; (S)-dihydroorotate from bicarbonate: step 3/3. Its function is as follows. Catalyzes the conversion of ureidosuccinic acid (USA) to dihydroorotate, the third step of the de novo pyrimidine biosynthetic pathway. In Saccharomyces cerevisiae (strain ATCC 204508 / S288c) (Baker's yeast), this protein is Dihydroorotase (URA4).